The chain runs to 552 residues: Urocanate hydratase (552 aa).

Residues 49-50 (GG), Q127, 173-175 (GMG), D193, 239-240 (NA), 260-264 (QTSAH), 270-271 (YI), and Y319 each bind NAD(+). The active site involves C407. G489 is a binding site for NAD(+).

The protein belongs to the urocanase family. It depends on NAD(+) as a cofactor.

Its subcellular location is the cytoplasm. The catalysed reaction is 4-imidazolone-5-propanoate = trans-urocanate + H2O. It participates in amino-acid degradation; L-histidine degradation into L-glutamate; N-formimidoyl-L-glutamate from L-histidine: step 2/3. In terms of biological role, catalyzes the conversion of urocanate to 4-imidazolone-5-propionate. The polypeptide is Urocanate hydratase (Bacillus cereus (strain ATCC 14579 / DSM 31 / CCUG 7414 / JCM 2152 / NBRC 15305 / NCIMB 9373 / NCTC 2599 / NRRL B-3711)).